A 375-amino-acid chain; its full sequence is Succinyl-diaminopimelate desuccinylase (375 aa).

His-66 is a binding site for Zn(2+). Asp-68 is an active-site residue. Asp-99 serves as a coordination point for Zn(2+). The active-site Proton acceptor is the Glu-133. Positions 134, 162, and 348 each coordinate Zn(2+).

Belongs to the peptidase M20A family. DapE subfamily. Homodimer. The cofactor is Zn(2+). It depends on Co(2+) as a cofactor.

It catalyses the reaction N-succinyl-(2S,6S)-2,6-diaminopimelate + H2O = (2S,6S)-2,6-diaminopimelate + succinate. The protein operates within amino-acid biosynthesis; L-lysine biosynthesis via DAP pathway; LL-2,6-diaminopimelate from (S)-tetrahydrodipicolinate (succinylase route): step 3/3. Its function is as follows. Catalyzes the hydrolysis of N-succinyl-L,L-diaminopimelic acid (SDAP), forming succinate and LL-2,6-diaminopimelate (DAP), an intermediate involved in the bacterial biosynthesis of lysine and meso-diaminopimelic acid, an essential component of bacterial cell walls. The chain is Succinyl-diaminopimelate desuccinylase from Pectobacterium atrosepticum (strain SCRI 1043 / ATCC BAA-672) (Erwinia carotovora subsp. atroseptica).